A 568-amino-acid polypeptide reads, in one-letter code: Periplasmic trehalase (568 aa).

A signal peptide spans 1–39 (MPHVVARSGDVMSSAAPPSCTSLLGLSLSMFVAPCTLTA). Substrate is bound by residues Arg169, 176-177 (WD), Asn213, 222-224 (RSQ), 294-296 (RPE), and Gly327. Catalysis depends on proton donor/acceptor residues Asp329 and Glu511. Glu526 provides a ligand contact to substrate.

This sequence belongs to the glycosyl hydrolase 37 family.

It is found in the periplasm. The enzyme catalyses alpha,alpha-trehalose + H2O = alpha-D-glucose + beta-D-glucose. Provides the cells with the ability to utilize trehalose at high osmolarity by splitting it into glucose molecules that can subsequently be taken up by the phosphotransferase-mediated uptake system. This chain is Periplasmic trehalase, found in Xanthomonas oryzae pv. oryzae (strain MAFF 311018).